The sequence spans 347 residues: 4-hydroxy-2-oxovalerate aldolase (347 aa).

The 251-residue stretch at 2-252 (ILISDATLRD…DTRTTFERVM (251 aa)) folds into the Pyruvate carboxyltransferase domain. 10–11 (RD) serves as a coordination point for substrate. Aspartate 11 lines the Mn(2+) pocket. The active-site Proton acceptor is the histidine 14. Positions 164 and 191 each coordinate substrate. 2 residues coordinate Mn(2+): histidine 191 and histidine 193.

Belongs to the 4-hydroxy-2-oxovalerate aldolase family.

It carries out the reaction (S)-4-hydroxy-2-oxopentanoate = acetaldehyde + pyruvate. The chain is 4-hydroxy-2-oxovalerate aldolase (mhpE) from Burkholderia pseudomallei (strain 1710b).